The primary structure comprises 210 residues: 3-hexulose-6-phosphate synthase (210 aa).

Belongs to the HPS/KGPDC family. HPS subfamily.

The catalysed reaction is D-ribulose 5-phosphate + formaldehyde = D-arabino-hex-3-ulose 6-phosphate. It participates in one-carbon metabolism; formaldehyde assimilation via RuMP pathway; D-fructose 6-phosphate from D-ribulose 5-phosphate and formaldehyde: step 1/2. Its function is as follows. Catalyzes the condensation of ribulose 5-phosphate with formaldehyde to form 3-hexulose 6-phosphate. This is 3-hexulose-6-phosphate synthase from Staphylococcus epidermidis (strain ATCC 12228 / FDA PCI 1200).